Consider the following 290-residue polypeptide: Ribosome-inactivating protein bryodin I (290 aa).

Positions 1–23 (MIKLLVLWLLILTIFLKSPTVEG) are cleaved as a signal peptide. Residues E183 and E212 contribute to the active site. N-linked (GlcNAc...) asparagine glycans are attached at residues N214 and N250. Positions 271–290 (AIGEDISMTLIGFEHGLYGI) are cleaved as a propeptide — removed in mature form.

It belongs to the ribosome-inactivating protein family. Type 1 RIP subfamily. Post-translationally, appears to undergo proteolytic cleavage in the C-terminal to produce a shorter protein.

The catalysed reaction is Endohydrolysis of the N-glycosidic bond at one specific adenosine on the 28S rRNA.. Its function is as follows. Ribosome-inactivating protein of type 1, inhibits protein synthesis in animal cells. The sequence is that of Ribosome-inactivating protein bryodin I from Bryonia dioica (Red bryony).